A 178-amino-acid chain; its full sequence is Caveolin-1 (178 aa).

At Ser-2 the chain carries N-acetylserine. At Ser-2 the chain carries Phosphoserine. The segment at 2–94 (SGGKYVDSEG…WKASFTTFTV (93 aa)) is required for homooligomerization. The Cytoplasmic segment spans residues 2–104 (SGGKYVDSEG…TKYWFYRLLS (103 aa)). Lys-5 carries the N6-acetyllysine; alternate modification. A Glycyl lysine isopeptide (Lys-Gly) (interchain with G-Cter in ubiquitin); alternate cross-link involves residue Lys-5. Residue Tyr-6 is modified to Phosphotyrosine. Phosphoserine is present on Ser-9. Tyr-14 carries the post-translational modification Phosphotyrosine; by ABL1. Tyr-25 bears the Phosphotyrosine mark. Residues Lys-26, Lys-39, Lys-47, and Lys-57 each participate in a glycyl lysine isopeptide (Lys-Gly) (interchain with G-Cter in ubiquitin) cross-link. The interval 82-94 (DGIWKASFTTFTV) is interaction with CAVIN3. The segment at residues 105–125 (ALFGIPMALIWGIYFAILSFL) is an intramembrane region (helical). The Cytoplasmic segment spans residues 126–178 (HIWAVVPCIKSFLIEIQCISRVYSIYVHTFCDPLFEAIGKIFSSIRINMQKEI). The segment at 131–142 (VPCIKSFLIEIQ) is interacts with SPRY1, SPRY2, SPRY3 and SPRY4. S-palmitoyl cysteine attachment occurs at residues Cys-133, Cys-143, and Cys-156. The tract at residues 149-160 (SIYVHTFCDPLF) is interacts with SPRY1, SPRY2, and SPRY4. Residues 167 to 178 (FSSIRINMQKEI) form an interacts with SPRY1, SPRY2, SPRY3 and SPRY4 region.

Belongs to the caveolin family. As to quaternary structure, homooligomer. Interacts with GLIPR2. Interacts with NOSTRIN. Interacts with SNAP25 and STX1A. Interacts (via the N-terminus) with DPP4; the interaction is direct. Interacts with CTNNB1, CDH1 and JUP. Interacts with PACSIN2; this interaction induces membrane tubulation. Interacts with SLC7A9. Interacts with BMX and BTK. Interacts with TGFBR1. Interacts with CAVIN3 (via leucine-zipper domain) in a cholesterol-sensitive manner. Interacts with CAVIN1. Interacts with EHD2 in a cholesterol-dependent manner. Forms a ternary complex with UBXN6 and VCP; mediates CAV1 targeting to lysosomes for degradation. Interacts with ABCG1; this interaction regulates ABCG1-mediated cholesterol efflux. Interacts with NEU3; this interaction enhances NEU3 sialidase activity within caveola. Interacts (via C-terminus) with SPRY1, SPRY2 (via C-terminus), SPRY3, and SPRY4. Interacts with IGFBP5; this interaction allows trafficking of IGFBP5 from the plasma membrane to the nucleus. Phosphorylated at Tyr-14 by ABL1 in response to oxidative stress. Post-translationally, ubiquitinated. Undergo monoubiquitination and multi- and/or polyubiquitination. Monoubiquitination of N-terminal lysines promotes integration in a ternary complex with UBXN6 and VCP which promotes oligomeric CAV1 targeting to lysosomes for degradation. Ubiquitinated by ZNRF1; leading to degradation and modulation of the TLR4-mediated immune response.

Its subcellular location is the golgi apparatus membrane. It is found in the cell membrane. The protein resides in the membrane. The protein localises to the caveola. It localises to the membrane raft. May act as a scaffolding protein within caveolar membranes. Forms a stable heterooligomeric complex with CAV2 that targets to lipid rafts and drives caveolae formation. Mediates the recruitment of CAVIN proteins (CAVIN1/2/3/4) to the caveolae. Interacts directly with G-protein alpha subunits and can functionally regulate their activity. Involved in the costimulatory signal essential for T-cell receptor (TCR)-mediated T-cell activation. Its binding to DPP4 induces T-cell proliferation and NF-kappa-B activation in a T-cell receptor/CD3-dependent manner. Recruits CTNNB1 to caveolar membranes and may regulate CTNNB1-mediated signaling through the Wnt pathway. Negatively regulates TGFB1-mediated activation of SMAD2/3 by mediating the internalization of TGFBR1 from membrane rafts leading to its subsequent degradation. Binds 20(S)-hydroxycholesterol (20(S)-OHC). This is Caveolin-1 (CAV1) from Loxodonta africana (African elephant).